A 480-amino-acid chain; its full sequence is Glycogen synthase (480 aa).

Lys15 contributes to the ADP-alpha-D-glucose binding site.

Belongs to the glycosyltransferase 1 family. Bacterial/plant glycogen synthase subfamily.

It carries out the reaction [(1-&gt;4)-alpha-D-glucosyl](n) + ADP-alpha-D-glucose = [(1-&gt;4)-alpha-D-glucosyl](n+1) + ADP + H(+). It functions in the pathway glycan biosynthesis; glycogen biosynthesis. In terms of biological role, synthesizes alpha-1,4-glucan chains using ADP-glucose. In Clostridioides difficile (strain 630) (Peptoclostridium difficile), this protein is Glycogen synthase.